The primary structure comprises 388 residues: Mitochondrial distribution and morphology protein 12 (388 aa).

The SMP-LTD domain maps to 1–388 (MSLDINWSLL…VFPNFHTVAL (388 aa)). Disordered stretches follow at residues 75 to 101 (DDEG…RNEA) and 209 to 249 (PMSI…KVSS). A compositionally biased stretch (basic and acidic residues) spans 83-101 (EEKQREKEREERDKLRNEA). Pro residues predominate over residues 234–243 (PSPPAHPAGL).

Belongs to the MDM12 family. As to quaternary structure, component of the ER-mitochondria encounter structure (ERMES) or MDM complex, composed of MMM1, MDM10, MDM12 and MDM34. An MMM1 homodimer associates with one molecule of MDM12 on each side in a pairwise head-to-tail manner, and the SMP-LTD domains of MMM1 and MDM12 generate a continuous hydrophobic tunnel for phospholipid trafficking.

The protein localises to the mitochondrion outer membrane. It is found in the endoplasmic reticulum membrane. Component of the ERMES/MDM complex, which serves as a molecular tether to connect the endoplasmic reticulum (ER) and mitochondria. Components of this complex are involved in the control of mitochondrial shape and protein biogenesis, and function in nonvesicular lipid trafficking between the ER and mitochondria. MDM12 is required for the interaction of the ER-resident membrane protein MMM1 and the outer mitochondrial membrane-resident beta-barrel protein MDM10. The MDM12-MMM1 subcomplex functions in the major beta-barrel assembly pathway that is responsible for biogenesis of all mitochondrial outer membrane beta-barrel proteins, and acts in a late step after the SAM complex. The MDM10-MDM12-MMM1 subcomplex further acts in the TOM40-specific pathway after the action of the MDM12-MMM1 complex. Essential for establishing and maintaining the structure of mitochondria and maintenance of mtDNA nucleoids. This is Mitochondrial distribution and morphology protein 12 from Cryptococcus neoformans var. neoformans serotype D (strain JEC21 / ATCC MYA-565) (Filobasidiella neoformans).